The following is a 240-amino-acid chain: NDR1/HIN1-like protein 2 (240 aa).

The chain crosses the membrane as a helical span at residues 57–77 (NILIAVAVILGVAALILWLIF). Residues Asn109, Asn141, Asn151, and Asn223 are each glycosylated (N-linked (GlcNAc...) asparagine).

Expressed at low levels in roots, rosette leaves, cauline leaves, stems, flowers and siliques.

The protein localises to the cell membrane. In terms of biological role, may play a role in plant immunity. The sequence is that of NDR1/HIN1-like protein 2 from Arabidopsis thaliana (Mouse-ear cress).